The sequence spans 311 residues: Pyrimidine-specific ribonucleoside hydrolase RihA (311 aa).

Residue histidine 240 is part of the active site.

The protein belongs to the IUNH family. RihA subfamily.

In terms of biological role, hydrolyzes cytidine or uridine to ribose and cytosine or uracil, respectively. This chain is Pyrimidine-specific ribonucleoside hydrolase RihA, found in Salmonella newport (strain SL254).